The primary structure comprises 972 residues: UvrABC system protein A (972 aa).

32–39 (GLSGSGKS) lines the ATP pocket. The segment at 257-285 (CPNGHALAVDDLEPRSFSFNSPYGACPEC) adopts a C4-type; atypical zinc-finger fold. 2 consecutive ABC transporter domains span residues 315 to 601 (WSNG…KDSI) and 621 to 950 (VDPR…KFLA). 654-661 (GVSGSGKS) contributes to the ATP binding site. Residues 753–779 (CEACTGDGTIKIEMNFLPDVYVPCEVC) form a C4-type zinc finger.

It belongs to the ABC transporter superfamily. UvrA family. As to quaternary structure, forms a heterotetramer with UvrB during the search for lesions.

The protein resides in the cytoplasm. The UvrABC repair system catalyzes the recognition and processing of DNA lesions. UvrA is an ATPase and a DNA-binding protein. A damage recognition complex composed of 2 UvrA and 2 UvrB subunits scans DNA for abnormalities. When the presence of a lesion has been verified by UvrB, the UvrA molecules dissociate. The protein is UvrABC system protein A of Mycobacterium bovis (strain ATCC BAA-935 / AF2122/97).